We begin with the raw amino-acid sequence, 504 residues long: Maturase K (504 aa).

Belongs to the intron maturase 2 family. MatK subfamily.

The protein localises to the plastid. The protein resides in the chloroplast. Functionally, usually encoded in the trnK tRNA gene intron. Probably assists in splicing its own and other chloroplast group II introns. In Olimarabidopsis pumila (Dwarf rocket), this protein is Maturase K.